Here is a 209-residue protein sequence, read N- to C-terminus: Aspartate kinase-like protein lolA1 (209 aa).

The span at 1–11 (MLDESPMRKGD) shows a compositional bias: basic and acidic residues. Positions 1-27 (MLDESPMRKGDSVSNDQSNPESNASVS) are disordered. The span at 12 to 27 (SVSNDQSNPESNASVS) shows a compositional bias: polar residues.

The protein belongs to the aspartokinase family.

It functions in the pathway alkaloid biosynthesis. Functionally, aspartokinase-like protein; part of the gene cluster that mediates the biosynthesis of loline alkaloids, potent insecticidal agents composed of a pyrrolizidine ring system and an uncommon ether bridge linking carbons 2 and 7. Lolines are structurally differentiated by the various modifications of the L-amino group and include norloline, loline, N-methylloline, N-acetylloline, N-acetylnorloline, and N-formylloline. The first committed step is the condensation of O-acetyl-L-homoserine (derived from L-aspartic acid) and L-proline, probably catalyzed by the gamma-type pyridoxal 5'-phosphate(PLP)-dependent enzyme lolC, to give the diamino diacid, NACPP. Ensuing cyclization, decarboxylation, and acetylation steps yield 1-exo-acetamidopyrrolizidine (AcAP). LolO is required for installation of the ether bridge upon the pathway intermediate, 1-exo-acetamidopyrrolizidine (AcAP). In sequential 2-oxoglutarate- and O(2)-consuming steps, lolO removes hydrogens from C2 and C7 of AcAP to form both carbon-oxygen bonds in N-acetylnorloline (NANL), the precursor to all other lolines. The enzymes lolD, lolE, lolF and lolT have also been proposed to be involved in the ether-bridge installation. Further processing of the exocyclic moiety of NANL by fungal N-acetamidase (LolN), methyltransferase (LolM), and cytochrome P450 (LolP) enzymes, with occasional involvement of a plant acetyltransferase, generates the other known lolines. LolN transforms NANL to norlonine which is monomethylated and dimethylated to respectively lonine and N-methyllonine (NML) by lolM. LolP catalyzes hydroxylation of the methyl group in N-methylloline (NML) and further oxygenation to N-formylloline (NFL). A plant acetyltransferase is responsible for the acetylation of loline to form N-acetylloline (NAL). LolA might interact with aspartate kinase to prevent feedback inhibition of its activity by these end products and thereby promote production of L-homoserine from L-aspartate. This chain is Aspartate kinase-like protein lolA1, found in Epichloe uncinata (Endophyte fungus).